We begin with the raw amino-acid sequence, 415 residues long: D-threonate kinase (415 aa).

Residues Asp-9, Arg-53, and 81–84 (KIDS) each bind substrate. ATP is bound by residues Ser-251, 345–348 (GGET), and Gly-392.

It belongs to the four-carbon acid sugar kinase family.

It catalyses the reaction D-threonate + ATP = 4-O-phospho-D-threonate + ADP + H(+). Catalyzes the ATP-dependent phosphorylation of D-threonate to D-threonate 4-phosphate. Can also phosphorylate 4-hydroxy-L-threonine, with lower efficiency. This chain is D-threonate kinase, found in Cupriavidus necator (strain ATCC 17699 / DSM 428 / KCTC 22496 / NCIMB 10442 / H16 / Stanier 337) (Ralstonia eutropha).